The sequence spans 930 residues: Protocadherin gamma-A4 (930 aa).

The N-terminal stretch at 1–27 (MAAPYKSDRRGLIWICIFLGSLCDIRA) is a signal peptide. 6 consecutive Cadherin domains span residues 28–132 (EQIR…APSF), 133–241 (GAQQ…APVF), 242–346 (TQPE…APEV), 347–451 (TVTS…PPTF), 452–561 (THAS…TPEI), and 569–682 (DGST…APID). Over 28 to 691 (EQIRYSVPEE…DQEDSDITLY (664 aa)) the chain is Extracellular. Asn-418 and Asn-544 each carry an N-linked (GlcNAc...) asparagine glycan. The chain crosses the membrane as a helical span at residues 692–712 (LVVAVAAVSCVFLAFVIVLLI). The Cytoplasmic segment spans residues 713–930 (HRLRRWHSTR…KKKSGKKEKK (218 aa)). Disordered stretches follow at residues 803–839 (SSLQQAPPNTDWRFSQAQRPGTSGSQNGDETGTWPNN) and 900–930 (ATLTNAAGKRDGKAPAGGNGNKKKSGKKEKK). Residues 920–930 (NKKKSGKKEKK) are compositionally biased toward basic residues.

The protein localises to the cell membrane. Its function is as follows. Potential calcium-dependent cell-adhesion protein. May be involved in the establishment and maintenance of specific neuronal connections in the brain. The polypeptide is Protocadherin gamma-A4 (Mus musculus (Mouse)).